Consider the following 262-residue polypeptide: Acyl-[acyl-carrier-protein]--UDP-N-acetylglucosamine O-acyltransferase (262 aa).

This sequence belongs to the transferase hexapeptide repeat family. LpxA subfamily. Homotrimer.

Its subcellular location is the cytoplasm. The catalysed reaction is a (3R)-hydroxyacyl-[ACP] + UDP-N-acetyl-alpha-D-glucosamine = a UDP-3-O-[(3R)-3-hydroxyacyl]-N-acetyl-alpha-D-glucosamine + holo-[ACP]. It participates in glycolipid biosynthesis; lipid IV(A) biosynthesis; lipid IV(A) from (3R)-3-hydroxytetradecanoyl-[acyl-carrier-protein] and UDP-N-acetyl-alpha-D-glucosamine: step 1/6. Involved in the biosynthesis of lipid A, a phosphorylated glycolipid that anchors the lipopolysaccharide to the outer membrane of the cell. The chain is Acyl-[acyl-carrier-protein]--UDP-N-acetylglucosamine O-acyltransferase from Burkholderia vietnamiensis (strain G4 / LMG 22486) (Burkholderia cepacia (strain R1808)).